Reading from the N-terminus, the 67-residue chain is Brevinin-1CDYc (67 aa).

Residues 1–22 (MFTLKKSLLLIFFLGTINLSLC) form the signal peptide. A propeptide spanning residues 23–45 (EEERNADEEERRDDPEERDVEVE) is cleaved from the precursor. A disulfide bond links Cys61 and Cys67.

Belongs to the frog skin active peptide (FSAP) family. Brevinin subfamily. Expressed by the skin glands.

Its subcellular location is the secreted. In terms of biological role, antimicrobial peptide. This is Brevinin-1CDYc from Rana huanrensis (Huanren frog).